A 450-amino-acid chain; its full sequence is Oxygen-independent coproporphyrinogen III oxidase (450 aa).

One can recognise a Radical SAM core domain in the interval 45–282 (IPAGGSISLY…RTLILWDGYQ (238 aa)). An S-adenosyl-L-methionine-binding site is contributed by tyrosine 54. Cysteine 60 and cysteine 64 together coordinate [4Fe-4S] cluster. Phenylalanine 66 contributes to the S-adenosyl-L-methionine binding site. Cysteine 67 provides a ligand contact to [4Fe-4S] cluster. S-adenosyl-L-methionine-binding positions include glycine 111, 112–113 (GT), glutamate 144, glutamine 171, arginine 183, aspartate 208, alanine 242, and isoleucine 328.

This sequence belongs to the anaerobic coproporphyrinogen-III oxidase family. Monomer. [4Fe-4S] cluster is required as a cofactor.

The protein resides in the cytoplasm. The catalysed reaction is coproporphyrinogen III + 2 S-adenosyl-L-methionine = protoporphyrinogen IX + 2 5'-deoxyadenosine + 2 L-methionine + 2 CO2. It participates in porphyrin-containing compound metabolism; protoporphyrin-IX biosynthesis; protoporphyrinogen-IX from coproporphyrinogen-III (AdoMet route): step 1/1. Functionally, involved in the heme and chlorophyll biosynthesis. Catalyzes the anaerobic oxidative decarboxylation of propionate groups of rings A and B of coproporphyrinogen III to yield the vinyl groups in protoporphyrinogen IX. This Cereibacter sphaeroides (strain ATCC 17023 / DSM 158 / JCM 6121 / CCUG 31486 / LMG 2827 / NBRC 12203 / NCIMB 8253 / ATH 2.4.1.) (Rhodobacter sphaeroides) protein is Oxygen-independent coproporphyrinogen III oxidase (hemZ).